A 316-amino-acid polypeptide reads, in one-letter code: tRNA-cytidine(32) 2-sulfurtransferase (316 aa).

A PP-loop motif motif is present at residues 52–57; it reads SGGKDS. [4Fe-4S] cluster contacts are provided by cysteine 127, cysteine 130, and cysteine 218.

The protein belongs to the TtcA family. As to quaternary structure, homodimer. The cofactor is Mg(2+). [4Fe-4S] cluster is required as a cofactor.

It is found in the cytoplasm. It carries out the reaction cytidine(32) in tRNA + S-sulfanyl-L-cysteinyl-[cysteine desulfurase] + AH2 + ATP = 2-thiocytidine(32) in tRNA + L-cysteinyl-[cysteine desulfurase] + A + AMP + diphosphate + H(+). It functions in the pathway tRNA modification. In terms of biological role, catalyzes the ATP-dependent 2-thiolation of cytidine in position 32 of tRNA, to form 2-thiocytidine (s(2)C32). The sulfur atoms are provided by the cysteine/cysteine desulfurase (IscS) system. In Haemophilus ducreyi (strain 35000HP / ATCC 700724), this protein is tRNA-cytidine(32) 2-sulfurtransferase.